Reading from the N-terminus, the 474-residue chain is Crocetin glucosyltransferase, chloroplastic (474 aa).

The transit peptide at 1-45 directs the protein to the chloroplast; it reads MVQQRHVLLITYPAQGHINPALQFAQRLLRMGIQVTLATSVYALS. The Proton acceptor role is filled by H17. H17 serves as a coordination point for an anthocyanidin. 8 residues coordinate UDP-alpha-D-glucose: Q346, H361, W364, N365, S366, E369, D385, and Q386.

It belongs to the UDP-glycosyltransferase family. In terms of tissue distribution, ubiquitous.

It localises to the plastid. It is found in the chloroplast. It carries out the reaction crocetin + UDP-alpha-D-glucose = beta-D-glucosyl crocetin + UDP. It catalyses the reaction beta-D-glucosyl crocetin + UDP-alpha-D-glucose = bis(beta-D-glucosyl) crocetin + UDP. The catalysed reaction is beta-D-gentiobiosyl crocetin + UDP-alpha-D-glucose = beta-D-gentiobiosyl beta-D-glucosyl crocetin + UDP. Functionally, glucosyltransferase acting on a broad range of substrates, including crocetin, 4-coumaric acid, caffeic acid and ferulic acid. No activity with indol-3-acetic acid, bixin and norbixin, and no formation of O-glucosides. Involved with UGT94E5 in sequential glycosylation of crocetin to crocin (bis(beta-D-gentiobiosyl) crocetin). This is Crocetin glucosyltransferase, chloroplastic (UGT75L6) from Gardenia jasminoides (Cape jasmine).